A 225-amino-acid polypeptide reads, in one-letter code: Ribulose-phosphate 3-epimerase (225 aa).

Residue serine 9 participates in substrate binding. The a divalent metal cation site is built by histidine 34, aspartate 36, and histidine 68. Aspartate 36 acts as the Proton acceptor in catalysis. Residues histidine 68, 144 to 147, 177 to 179, and 199 to 200 contribute to the substrate site; these read GFGG, DGG, and GS. Aspartate 177 contacts a divalent metal cation. The active-site Proton donor is the aspartate 177.

Belongs to the ribulose-phosphate 3-epimerase family. Requires a divalent metal cation as cofactor.

The enzyme catalyses D-ribulose 5-phosphate = D-xylulose 5-phosphate. Its pathway is carbohydrate degradation. Its function is as follows. Catalyzes the reversible epimerization of D-ribulose 5-phosphate to D-xylulose 5-phosphate. This Escherichia coli O157:H7 protein is Ribulose-phosphate 3-epimerase.